We begin with the raw amino-acid sequence, 590 residues long: L-asparaginase (590 aa).

An Asparaginase/glutaminase domain is found at 6–357; it reads AHVLVLYTGG…VEKKAMMVKN (352 aa). The O-isoaspartyl threonine intermediate role is filled by Thr16. The segment at 44-351 is asparaginase; the sequence is NDDDYVSTYY…KDCWELVEKK (308 aa). Residues 85 to 87 and 117 to 118 contribute to the substrate site; these read DSS and TD. ANK repeat units lie at residues 398-427, 431-460, 497-526, and 530-559; these read IFPQLLCYAASNGDIEMLKALHENGVDLSV, NGRNALHVAASAGHVGAVKYLLTQGVSFHL, RLGVELCLCASYGDTETLNSWLAAGADINQ, and NGETALHIAVKSRNKQLVHYLLDRDADPYK.

It in the N-terminal section; belongs to the asparaginase 1 family. May be present in the larval cuticle.

It catalyses the reaction L-asparagine + H2O = L-aspartate + NH4(+). The protein is L-asparaginase of Dirofilaria immitis (Canine heartworm).